We begin with the raw amino-acid sequence, 146 residues long: Probable flagellum biosynthesis repressor protein FlbT 1 (146 aa).

The protein belongs to the FlbT family.

Has a post-transcriptional repressor function in flagellum biogenesis. Associates with the 5'-UTR of fljK mRNA and promotes its degradation. The protein is Probable flagellum biosynthesis repressor protein FlbT 1 of Bradyrhizobium diazoefficiens (strain JCM 10833 / BCRC 13528 / IAM 13628 / NBRC 14792 / USDA 110).